A 98-amino-acid polypeptide reads, in one-letter code: NADH-ubiquinone oxidoreductase chain 4L (98 aa).

Helical transmembrane passes span 1–21 (MSLV…GLLM), 29–49 (SLLC…LIIL), and 61–81 (IILL…LVMV).

It belongs to the complex I subunit 4L family. As to quaternary structure, core subunit of respiratory chain NADH dehydrogenase (Complex I) which is composed of 45 different subunits.

The protein resides in the mitochondrion inner membrane. It catalyses the reaction a ubiquinone + NADH + 5 H(+)(in) = a ubiquinol + NAD(+) + 4 H(+)(out). Its function is as follows. Core subunit of the mitochondrial membrane respiratory chain NADH dehydrogenase (Complex I) which catalyzes electron transfer from NADH through the respiratory chain, using ubiquinone as an electron acceptor. Part of the enzyme membrane arm which is embedded in the lipid bilayer and involved in proton translocation. The sequence is that of NADH-ubiquinone oxidoreductase chain 4L (MT-ND4L) from Hippopotamus amphibius (Hippopotamus).